The sequence spans 392 residues: Hercynylcysteine sulfoxide lyase (392 aa).

Residue Lys-219 is modified to N6-(pyridoxal phosphate)lysine.

This sequence belongs to the class-V pyridoxal-phosphate-dependent aminotransferase family. EgtE subfamily. It depends on pyridoxal 5'-phosphate as a cofactor.

It localises to the cytoplasm. The protein resides in the nucleus. The enzyme catalyses S-(hercyn-2-yl)-L-cysteine S-oxide + AH2 + H(+) = ergothioneine + pyruvate + A + NH4(+). It participates in amino-acid biosynthesis; ergothioneine biosynthesis. Functionally, catalyzes the conversion of hercynylcysteine sulfoxide to ergothioneine by cleaving the cysteine residue at the sulfur atom, the last step in the biosynthesis pathway of ergothioneine. This chain is Hercynylcysteine sulfoxide lyase, found in Schizosaccharomyces pombe (strain 972 / ATCC 24843) (Fission yeast).